A 1393-amino-acid chain; its full sequence is DNA-directed RNA polymerase subunit beta' (1393 aa).

Residues cysteine 72, cysteine 74, cysteine 87, and cysteine 90 each coordinate Zn(2+). Positions 463, 465, and 467 each coordinate Mg(2+). 4 residues coordinate Zn(2+): cysteine 812, cysteine 887, cysteine 894, and cysteine 897.

Belongs to the RNA polymerase beta' chain family. The RNAP catalytic core consists of 2 alpha, 1 beta, 1 beta' and 1 omega subunit. When a sigma factor is associated with the core the holoenzyme is formed, which can initiate transcription. The cofactor is Mg(2+). It depends on Zn(2+) as a cofactor.

The catalysed reaction is RNA(n) + a ribonucleoside 5'-triphosphate = RNA(n+1) + diphosphate. DNA-dependent RNA polymerase catalyzes the transcription of DNA into RNA using the four ribonucleoside triphosphates as substrates. This Chlamydia felis (strain Fe/C-56) (Chlamydophila felis) protein is DNA-directed RNA polymerase subunit beta'.